Consider the following 331-residue polypeptide: MALIDPFNRKIDYLRVSVTDKCNYRCGYCMPEQGAHPEGRHTEYLDYDELARIIKAFVDLGVTKVRITGGEPLVRKGLPGFIEEIQPYEGLEEIALSTNAHHLDKHAVALKKAGLSRANVSIDSLQPEKFNKITRGGNLEKVLAGVDAGLAAGLNPIKFNMVVMKGTNDDEIEAMVDYGIEKGVEVRFIETMPIGEAGISLMDQHYPMEKIMARVRAHVGTDLIPATGKSHDGPSKNFHIKGTDAKIGVISAVSQHFCESCNRVRLTARGVLALCLGQEDSVDLRTPIREGISDEALKQMIVDAMLKKPEKHFFNENVHNIEFRQMVSLGG.

The Radical SAM core domain occupies Pro-6 to Pro-234. Arg-15 provides a ligand contact to GTP. [4Fe-4S] cluster is bound by residues Cys-22 and Cys-26. Tyr-28 lines the S-adenosyl-L-methionine pocket. Cys-29 is a [4Fe-4S] cluster binding site. Arg-66 contacts GTP. Position 70 (Gly-70) interacts with S-adenosyl-L-methionine. GTP is bound at residue Ser-97. Ser-121 is a binding site for S-adenosyl-L-methionine. Lys-158 lines the GTP pocket. Residue Met-192 participates in S-adenosyl-L-methionine binding. Positions 258 and 261 each coordinate [4Fe-4S] cluster. GTP is bound at residue Arg-263 to Arg-265. Cys-275 is a binding site for [4Fe-4S] cluster.

It belongs to the radical SAM superfamily. MoaA family. Monomer and homodimer. [4Fe-4S] cluster serves as cofactor.

It carries out the reaction GTP + AH2 + S-adenosyl-L-methionine = (8S)-3',8-cyclo-7,8-dihydroguanosine 5'-triphosphate + 5'-deoxyadenosine + L-methionine + A + H(+). It functions in the pathway cofactor biosynthesis; molybdopterin biosynthesis. Its function is as follows. Catalyzes the cyclization of GTP to (8S)-3',8-cyclo-7,8-dihydroguanosine 5'-triphosphate. This chain is GTP 3',8-cyclase, found in Hydrogenovibrio crunogenus (strain DSM 25203 / XCL-2) (Thiomicrospira crunogena).